The chain runs to 207 residues: dTTP/UTP pyrophosphatase (207 aa).

The Proton acceptor role is filled by D86.

It belongs to the Maf family. YhdE subfamily. A divalent metal cation is required as a cofactor.

It localises to the cytoplasm. The enzyme catalyses dTTP + H2O = dTMP + diphosphate + H(+). The catalysed reaction is UTP + H2O = UMP + diphosphate + H(+). Nucleoside triphosphate pyrophosphatase that hydrolyzes dTTP and UTP. May have a dual role in cell division arrest and in preventing the incorporation of modified nucleotides into cellular nucleic acids. This chain is dTTP/UTP pyrophosphatase, found in Nitrosospira multiformis (strain ATCC 25196 / NCIMB 11849 / C 71).